A 902-amino-acid polypeptide reads, in one-letter code: Leucine-rich repeat-containing G-protein coupled receptor 5 (902 aa).

Positions 1–22 are cleaved as a signal peptide; sequence MDTSKTSFFLFSVLCSLQLVGA. The Extracellular segment spans residues 23-558; it reads ARPGKQQRSC…HLFGSWLTRT (536 aa). Intrachain disulfides connect Cys-32/Cys-38 and Cys-36/Cys-49. The 30-residue stretch at 32 to 61 folds into the LRRNT domain; the sequence is CPTPCECEQEGMLVRVDCSDRALTSLPRNL. 17 LRR repeats span residues 41-61, 62-85, 86-109, 111-133, 134-157, 159-181, 182-205, 207-229, 230-253, 254-276, 278-300, 302-324, 325-347, 348-372, 374-393, 394-417, and 418-441; these read EGMLVRVDCSDRALTSLPRNL, SIFTSYLDLSMNNITNLPSNVMHN, LHFLEELRLAGNDLTYIPKGAFAG, GSLKVLMLQNNLLRQVPSEALHN, LRSLQSLRLDANHISYVPPSSFNG, FSLRHLWLDDNSLTEIPVRALES, LSALQAMTLALNKIHHIPDYAFRN, SSLVVLHLHNNRIYSLGKKCFDG, LHSLETLDLNYNNLDEFPAAIKTL, KNLKELGFHSNNIKSIPEQAFIG, PSLITIHFYDNPIQHVGRSAFQH, PELRTLILNGASQITEFPDLTGT, TSLESLTLTGAQLVYLPSAVCTQ, LPNLQVLDLSYNHIKDLPSFSGCQR, QKIDLRHNEVYEIRSTTFQQ, LVGLRSLDLAWNKIAVIHPNSFSS, and LPSLIKLDLSSNHLTSFPVTGLHG. 2 N-linked (GlcNAc...) asparagine glycosylation sites follow: Asn-60 and Asn-74. Asn-205 carries N-linked (GlcNAc...) asparagine glycosylation. Cys-345 and Cys-370 are disulfide-bonded. A disulfide bridge connects residues Cys-476 and Cys-537. Asn-496 carries N-linked (GlcNAc...) asparagine glycosylation. Residues 559–579 form a helical membrane-spanning segment; that stretch reads GVWLIVLLSFVCNALVIATVF. Residues 580–589 lie on the Cytoplasmic side of the membrane; that stretch reads RPLSYVPSIK. A helical transmembrane segment spans residues 590 to 610; it reads LLIGLIAIMNTLMGLSSGVLA. Residues 598–619 form an LRR 18 repeat; sequence MNTLMGLSSGVLATVDALTFGN. At 611-634 the chain is on the extracellular side; the sequence is TVDALTFGNFAQYGAWWESGVGCQ. Cysteines 633 and 708 form a disulfide. Residues 635-655 form a helical membrane-spanning segment; it reads ITGFLSVFAAETSIFLLTVAA. At 656–678 the chain is on the cytoplasmic side; that stretch reads LERGFSIKCTTKFETKSSFINVK. Residues 679 to 699 traverse the membrane as a helical segment; that stretch reads LSIVFCFLLSIVIAVSPLLSG. The Extracellular portion of the chain corresponds to 700–718; sequence STYGTSPLCFPLLFGDPSS. A helical membrane pass occupies residues 719–739; that stretch reads MGFMVALVLLNSLCFLVMTIA. Residues 740-763 lie on the Cytoplasmic side of the membrane; the sequence is YTKLYCSLEKGELENIWDCSMVKH. A helical membrane pass occupies residues 764-784; it reads IALLLFTNCILYCPVAFLSFS. Over 785–798 the chain is Extracellular; sequence SLLNLTFISPEVNK. 2 N-linked (GlcNAc...) asparagine glycosylation sites follow: Asn-788 and Asn-797. The helical transmembrane segment at 799 to 819 threads the bilayer; it reads SILLLIIPLPACLNPLLYILF. The Cytoplasmic segment spans residues 820-902; the sequence is NPHFKEDIGS…LSAVAFVPCH (83 aa).

It belongs to the G-protein coupled receptor 1 family.

The protein localises to the cell membrane. Its subcellular location is the golgi apparatus. The protein resides in the trans-Golgi network membrane. Receptor for R-spondins that potentiates the canonical Wnt signaling pathway and acts as a stem cell marker of the intestinal epithelium and the hair follicle. Upon binding to R-spondins (RSPO1, RSPO2, RSPO3 or RSPO4), associates with phosphorylated LRP6 and frizzled receptors that are activated by extracellular Wnt receptors, triggering the canonical Wnt signaling pathway to increase expression of target genes. In contrast to classical G-protein coupled receptors, does not activate heterotrimeric G-proteins to transduce the signal. Involved in the development and/or maintenance of the adult intestinal stem cells during postembryonic development. The chain is Leucine-rich repeat-containing G-protein coupled receptor 5 (lgr5) from Xenopus tropicalis (Western clawed frog).